The primary structure comprises 90 residues: Small ribosomal subunit protein uS17 (90 aa).

Belongs to the universal ribosomal protein uS17 family. As to quaternary structure, part of the 30S ribosomal subunit.

Its function is as follows. One of the primary rRNA binding proteins, it binds specifically to the 5'-end of 16S ribosomal RNA. The protein is Small ribosomal subunit protein uS17 of Burkholderia mallei (strain NCTC 10247).